The sequence spans 279 residues: Undecaprenyl-diphosphatase (279 aa).

The next 8 membrane-spanning stretches (helical) occupy residues L2–L22, A44–I64, W85–L105, F113–I133, V163–L183, T188–L208, A223–I243, and F255–F275.

Belongs to the UppP family.

It is found in the cell membrane. The enzyme catalyses di-trans,octa-cis-undecaprenyl diphosphate + H2O = di-trans,octa-cis-undecaprenyl phosphate + phosphate + H(+). Catalyzes the dephosphorylation of undecaprenyl diphosphate (UPP). Confers resistance to bacitracin. This is Undecaprenyl-diphosphatase from Streptococcus pyogenes serotype M2 (strain MGAS10270).